The primary structure comprises 276 residues: D-aminoacyl-tRNA deacylase (276 aa).

The protein belongs to the DtdA deacylase family. Monomer. It depends on Zn(2+) as a cofactor.

The catalysed reaction is a D-aminoacyl-tRNA + H2O = a tRNA + a D-alpha-amino acid + H(+). The enzyme catalyses glycyl-tRNA(Ala) + H2O = tRNA(Ala) + glycine + H(+). In terms of biological role, D-aminoacyl-tRNA deacylase with broad substrate specificity. By recycling D-aminoacyl-tRNA to D-amino acids and free tRNA molecules, this enzyme counteracts the toxicity associated with the formation of D-aminoacyl-tRNA entities in vivo. This is D-aminoacyl-tRNA deacylase from Staphylothermus marinus (strain ATCC 43588 / DSM 3639 / JCM 9404 / F1).